The primary structure comprises 206 residues: Large ribosomal subunit protein uL3 (206 aa).

The tract at residues 127–151 is disordered; sequence SGGPSSHGSKFHRHLGGTGQATTPA.

It belongs to the universal ribosomal protein uL3 family. As to quaternary structure, part of the 50S ribosomal subunit. Forms a cluster with proteins L14 and L19.

In terms of biological role, one of the primary rRNA binding proteins, it binds directly near the 3'-end of the 23S rRNA, where it nucleates assembly of the 50S subunit. The protein is Large ribosomal subunit protein uL3 of Borreliella burgdorferi (strain ZS7) (Borrelia burgdorferi).